Reading from the N-terminus, the 274-residue chain is Diaminopimelate epimerase (274 aa).

Residues N11, Q44, and N64 each contribute to the substrate site. Catalysis depends on C73, which acts as the Proton donor. Substrate contacts are provided by residues 74 to 75 (GN), N157, N190, and 208 to 209 (ER). Catalysis depends on C217, which acts as the Proton acceptor. 218-219 (GS) serves as a coordination point for substrate.

It belongs to the diaminopimelate epimerase family. In terms of assembly, homodimer.

It is found in the cytoplasm. It carries out the reaction (2S,6S)-2,6-diaminopimelate = meso-2,6-diaminopimelate. The protein operates within amino-acid biosynthesis; L-lysine biosynthesis via DAP pathway; DL-2,6-diaminopimelate from LL-2,6-diaminopimelate: step 1/1. Catalyzes the stereoinversion of LL-2,6-diaminopimelate (L,L-DAP) to meso-diaminopimelate (meso-DAP), a precursor of L-lysine and an essential component of the bacterial peptidoglycan. This Proteus mirabilis (strain HI4320) protein is Diaminopimelate epimerase.